We begin with the raw amino-acid sequence, 134 residues long: Small ribosomal subunit protein uS11 (134 aa).

The protein belongs to the universal ribosomal protein uS11 family. As to quaternary structure, part of the 30S ribosomal subunit. Interacts with proteins S7 and S18. Binds to IF-3.

Its function is as follows. Located on the platform of the 30S subunit, it bridges several disparate RNA helices of the 16S rRNA. Forms part of the Shine-Dalgarno cleft in the 70S ribosome. The chain is Small ribosomal subunit protein uS11 from Albidiferax ferrireducens (strain ATCC BAA-621 / DSM 15236 / T118) (Rhodoferax ferrireducens).